We begin with the raw amino-acid sequence, 152 residues long: Holo-[acyl-carrier-protein] synthase (152 aa).

2 residues coordinate Mg(2+): D7 and E60.

This sequence belongs to the P-Pant transferase superfamily. AcpS family. It depends on Mg(2+) as a cofactor.

It is found in the cytoplasm. It catalyses the reaction apo-[ACP] + CoA = holo-[ACP] + adenosine 3',5'-bisphosphate + H(+). Functionally, transfers the 4'-phosphopantetheine moiety from coenzyme A to a Ser of acyl-carrier-protein. The polypeptide is Holo-[acyl-carrier-protein] synthase (Bifidobacterium adolescentis (strain ATCC 15703 / DSM 20083 / NCTC 11814 / E194a)).